The chain runs to 318 residues: 4-hydroxy-3-methylbut-2-enyl diphosphate reductase (318 aa).

Residue Cys12 coordinates [4Fe-4S] cluster. Residues His41 and His74 each coordinate (2E)-4-hydroxy-3-methylbut-2-enyl diphosphate. Residues His41 and His74 each coordinate dimethylallyl diphosphate. 2 residues coordinate isopentenyl diphosphate: His41 and His74. [4Fe-4S] cluster is bound at residue Cys96. (2E)-4-hydroxy-3-methylbut-2-enyl diphosphate is bound at residue His124. His124 contributes to the dimethylallyl diphosphate binding site. Position 124 (His124) interacts with isopentenyl diphosphate. Glu126 (proton donor) is an active-site residue. Residue Thr168 participates in (2E)-4-hydroxy-3-methylbut-2-enyl diphosphate binding. Cys198 contributes to the [4Fe-4S] cluster binding site. (2E)-4-hydroxy-3-methylbut-2-enyl diphosphate contacts are provided by Ser226, Ser227, Asn228, and Ser270. Ser226, Ser227, Asn228, and Ser270 together coordinate dimethylallyl diphosphate. Ser226, Ser227, Asn228, and Ser270 together coordinate isopentenyl diphosphate.

Belongs to the IspH family. [4Fe-4S] cluster serves as cofactor.

It carries out the reaction isopentenyl diphosphate + 2 oxidized [2Fe-2S]-[ferredoxin] + H2O = (2E)-4-hydroxy-3-methylbut-2-enyl diphosphate + 2 reduced [2Fe-2S]-[ferredoxin] + 2 H(+). The enzyme catalyses dimethylallyl diphosphate + 2 oxidized [2Fe-2S]-[ferredoxin] + H2O = (2E)-4-hydroxy-3-methylbut-2-enyl diphosphate + 2 reduced [2Fe-2S]-[ferredoxin] + 2 H(+). It participates in isoprenoid biosynthesis; dimethylallyl diphosphate biosynthesis; dimethylallyl diphosphate from (2E)-4-hydroxy-3-methylbutenyl diphosphate: step 1/1. The protein operates within isoprenoid biosynthesis; isopentenyl diphosphate biosynthesis via DXP pathway; isopentenyl diphosphate from 1-deoxy-D-xylulose 5-phosphate: step 6/6. Functionally, catalyzes the conversion of 1-hydroxy-2-methyl-2-(E)-butenyl 4-diphosphate (HMBPP) into a mixture of isopentenyl diphosphate (IPP) and dimethylallyl diphosphate (DMAPP). Acts in the terminal step of the DOXP/MEP pathway for isoprenoid precursor biosynthesis. This is 4-hydroxy-3-methylbut-2-enyl diphosphate reductase from Psychrobacter arcticus (strain DSM 17307 / VKM B-2377 / 273-4).